The primary structure comprises 468 residues: Immunoglobulin superfamily member 21 (468 aa).

Positions 1 to 24 (MRAAPSLRRASCLLLAAILDLARG) are cleaved as a signal peptide. Ig-like domains are found at residues 25–132 (YLTV…VVLA) and 344–429 (PKIM…TRLI). The cysteines at positions 46 and 116 are disulfide-linked.

Interacts (Ig-like 1 domain) with NRXN2 (via Laminin G-like 1 domain) in a trans-interaction manner. In terms of tissue distribution, expressed in brain.

It is found in the postsynaptic cell membrane. Involved in synaptic inhibition in the brain. Selectively regulates inhibitory presynaptic differentiation through interacting with presynaptic NRXN2. The polypeptide is Immunoglobulin superfamily member 21 (Rattus norvegicus (Rat)).